The chain runs to 459 residues: Sensor histidine kinase SpaK (459 aa).

The Cytoplasmic segment spans residues 1–18 (MGIGFKGRKTLLRELVKY). The helical transmembrane segment at 19-39 (MVTLCISLVVLALLYIFINTI) threads the bilayer. The Extracellular segment spans residues 40 to 155 (AMNTGFSHPA…RKYLPNYELT (116 aa)). The helical transmembrane segment at 156 to 176 (SICILIILLIIVISIITTYFA) threads the bilayer. Residues 177 to 459 (NRLRKHFETL…VRVKIPLRNE (283 aa)) are Cytoplasmic-facing. One can recognise a Histidine kinase domain in the interval 244 to 458 (ALAHEIKIPI…EVRVKIPLRN (215 aa)). His247 is modified (phosphohistidine; by autocatalysis).

Its subcellular location is the cell membrane. The enzyme catalyses ATP + protein L-histidine = ADP + protein N-phospho-L-histidine.. In terms of biological role, member of the two-component regulatory system SpaK/SpaR involved in the regulation of the biosynthesis of lantibiotic subtilin. SpaK may function as a membrane-associated protein kinase that phosphorylates SpaR in response to environmental signals. In Bacillus subtilis, this protein is Sensor histidine kinase SpaK (spaK).